The primary structure comprises 147 residues: uncharacterized protein (147 aa).

Residues 44–147 (LVGYIDKEIH…LKSIKERLSI (104 aa)) form the HTH LytTR-type domain.

The protein resides in the cytoplasm. This is an uncharacterized protein from Staphylococcus aureus (strain COL).